The following is a 313-amino-acid chain: Beta-ketoacyl-[acyl-carrier-protein] synthase III (313 aa).

Residues Cys112 and His238 contribute to the active site. The ACP-binding stretch occupies residues 239 to 243 (QANIR). Asn268 is a catalytic residue.

The protein belongs to the thiolase-like superfamily. FabH family. Homodimer.

The protein localises to the cytoplasm. The catalysed reaction is malonyl-[ACP] + acetyl-CoA + H(+) = 3-oxobutanoyl-[ACP] + CO2 + CoA. It participates in lipid metabolism; fatty acid biosynthesis. Catalyzes the condensation reaction of fatty acid synthesis by the addition to an acyl acceptor of two carbons from malonyl-ACP. Catalyzes the first condensation reaction which initiates fatty acid synthesis and may therefore play a role in governing the total rate of fatty acid production. Possesses both acetoacetyl-ACP synthase and acetyl transacylase activities. Its substrate specificity determines the biosynthesis of branched-chain and/or straight-chain of fatty acids. The sequence is that of Beta-ketoacyl-[acyl-carrier-protein] synthase III from Staphylococcus epidermidis (strain ATCC 35984 / DSM 28319 / BCRC 17069 / CCUG 31568 / BM 3577 / RP62A).